Reading from the N-terminus, the 399-residue chain is Tryptophan synthase beta chain (399 aa).

Lys92 carries the post-translational modification N6-(pyridoxal phosphate)lysine.

The protein belongs to the TrpB family. In terms of assembly, tetramer of two alpha and two beta chains. The cofactor is pyridoxal 5'-phosphate.

The catalysed reaction is (1S,2R)-1-C-(indol-3-yl)glycerol 3-phosphate + L-serine = D-glyceraldehyde 3-phosphate + L-tryptophan + H2O. Its pathway is amino-acid biosynthesis; L-tryptophan biosynthesis; L-tryptophan from chorismate: step 5/5. Functionally, the beta subunit is responsible for the synthesis of L-tryptophan from indole and L-serine. In Legionella pneumophila (strain Corby), this protein is Tryptophan synthase beta chain.